A 371-amino-acid chain; its full sequence is Peptide chain release factor 2 (371 aa).

Residue Q251 is modified to N5-methylglutamine.

This sequence belongs to the prokaryotic/mitochondrial release factor family. Methylated by PrmC. Methylation increases the termination efficiency of RF2.

It is found in the cytoplasm. Its function is as follows. Peptide chain release factor 2 directs the termination of translation in response to the peptide chain termination codons UGA and UAA. In Arthrobacter sp. (strain FB24), this protein is Peptide chain release factor 2.